The primary structure comprises 238 residues: Zinc import ATP-binding protein ZnuC (238 aa).

An ABC transporter domain is found at 5 to 220; the sequence is ITLKNIHVSF…LEFISIFGLK (216 aa). 37–44 contributes to the ATP binding site; the sequence is GPNGAGKS.

The protein belongs to the ABC transporter superfamily. Zinc importer (TC 3.A.1.15.5) family. In terms of assembly, the complex is composed of two ATP-binding proteins (ZnuC), two transmembrane proteins (ZnuB) and a solute-binding protein (ZnuA).

The protein localises to the cell inner membrane. The enzyme catalyses Zn(2+)(out) + ATP(in) + H2O(in) = Zn(2+)(in) + ADP(in) + phosphate(in) + H(+)(in). Part of the ABC transporter complex ZnuABC involved in zinc import. Responsible for energy coupling to the transport system. This chain is Zinc import ATP-binding protein ZnuC, found in Buchnera aphidicola subsp. Schizaphis graminum (strain Sg).